Here is a 58-residue protein sequence, read N- to C-terminus: Mesomartoxin (58 aa).

An N-terminal signal peptide occupies residues 1-29 (MMSRLSVFILIALVLSVIIDVLNNSKVEG). Cystine bridges form between Cys31-Cys49, Cys35-Cys54, and Cys39-Cys56.

This sequence belongs to the short scorpion toxin superfamily. Potassium channel inhibitor family. Alpha-KTx 26 subfamily. In terms of tissue distribution, expressed by the venom gland.

Its subcellular location is the secreted. Its function is as follows. Recombinant toxin that reversibly blocks the voltage-gated potassium channels Shaker (IC(50)=0.054 nM), rKv1.2/KCNA2 (IC(50)=15.6 nM), and rKv1.3/KCNA3 (IC(50)=12.5 uM). The sequence is that of Mesomartoxin from Olivierus martensii (Manchurian scorpion).